Here is a 209-residue protein sequence, read N- to C-terminus: N-(5'-phosphoribosyl)anthranilate isomerase (209 aa).

Belongs to the TrpF family.

The enzyme catalyses N-(5-phospho-beta-D-ribosyl)anthranilate = 1-(2-carboxyphenylamino)-1-deoxy-D-ribulose 5-phosphate. It participates in amino-acid biosynthesis; L-tryptophan biosynthesis; L-tryptophan from chorismate: step 3/5. The protein is N-(5'-phosphoribosyl)anthranilate isomerase of Pyrobaculum islandicum (strain DSM 4184 / JCM 9189 / GEO3).